Reading from the N-terminus, the 269-residue chain is Hydroxyethylthiazole kinase (269 aa).

Met42 contacts substrate. ATP is bound by residues Arg118 and Ser164. Residue Gly191 coordinates substrate.

Belongs to the Thz kinase family. Mg(2+) is required as a cofactor.

It catalyses the reaction 5-(2-hydroxyethyl)-4-methylthiazole + ATP = 4-methyl-5-(2-phosphooxyethyl)-thiazole + ADP + H(+). It functions in the pathway cofactor biosynthesis; thiamine diphosphate biosynthesis; 4-methyl-5-(2-phosphoethyl)-thiazole from 5-(2-hydroxyethyl)-4-methylthiazole: step 1/1. Its function is as follows. Catalyzes the phosphorylation of the hydroxyl group of 4-methyl-5-beta-hydroxyethylthiazole (THZ). The chain is Hydroxyethylthiazole kinase from Listeria monocytogenes serovar 1/2a (strain ATCC BAA-679 / EGD-e).